The chain runs to 729 residues: Replication restart protein PriA (729 aa).

Residues 209–376 (QTALGRFRSF…QSGAYRLLQL (168 aa)) enclose the Helicase ATP-binding domain. Position 222–229 (222–229 (GITGSGKT)) interacts with ATP. The DEAH box signature appears at 319-322 (DEEH). Residues C436, C439, C445, C448, C463, C466, C476, and C479 each contribute to the Zn(2+) site. The Helicase C-terminal domain occupies 471 to 623 (PIPFKCPDCG…YAVFAENELN (153 aa)).

Belongs to the helicase family. PriA subfamily. As to quaternary structure, interacts with PriB with high affinity in the absence of DNA. Component of the replication restart primosome. Zn(2+) serves as cofactor.

The enzyme catalyses Couples ATP hydrolysis with the unwinding of duplex DNA by translocating in the 3'-5' direction.. It carries out the reaction ATP + H2O = ADP + phosphate + H(+). With respect to regulation, helicase and ATPase activities on forked DNA are stimulated by PriB; E.coli PriB does not stimulate this helicase. PriA:PriB complex-catalyzed duplex DNA winding is inhibited by CGS 15943 (CHEBI:131351). CGS 15943 decreases ATP hydrolysis and decreases PriA's affinity for DNA. In terms of biological role, initiates the restart of stalled replication forks, which reloads the replicative helicase on sites other than the origin of replication. Recognizes and binds to abandoned replication forks and remodels them to uncover a helicase loading site. Promotes assembly of the primosome at these replication forks. Its function is as follows. DNA helicase with greatest unwinding activity on forked DNA substrates with relatively short duplex lagging strand arms. A DNA-dependent ATPase. Required for DNA transformation and DNA repair. Binds single-stranded (ss)DNA and replication fork-like DNA but not double-stranded (ds)DNA. The protein is Replication restart protein PriA of Neisseria gonorrhoeae (strain ATCC 700825 / FA 1090).